The sequence spans 642 residues: A-kinase anchor protein 8-like (642 aa).

Residues 1–269 (MSYTGFVQGS…MRRTWKTWTT (269 aa)) are sufficient for activation of CTE-mediated expression. R209 is modified (asymmetric dimethylarginine; alternate). R209 carries the omega-N-methylarginine; alternate modification. Residues R218, R238, and R248 each carry the omega-N-methylarginine modification. Position 258 is an N6-acetyllysine (K258). Residues 265–382 (KTWTTADFRT…QDKQKKRQRD (118 aa)) form a disordered region. Residue T268 is modified to Phosphothreonine. A Nuclear localization signal motif is present at residues 275–280 (KKKKRK). The short motif at 281–297 (QGGSPDEPDSKATRTDC) is the Nuclear export signal (NES) element. The residue at position 284 (S284) is a Phosphoserine. The span at 288 to 297 (PDSKATRTDC) shows a compositional bias: basic and acidic residues. T293 bears the Phosphothreonine mark. S298 is modified (phosphoserine). The segment covering 299 to 315 (DNSDSDNDEGTEGEAAE) has biased composition (acidic residues). The span at 338 to 350 (EDGREEGKEDPEK) shows a compositional bias: basic and acidic residues. The Nuclear localization signal signature appears at 363–365 (KRK). C2H2 AKAP95-type zinc fingers lie at residues 392–414 (CSLC…SKFH) and 485–508 (CAAC…TMDH). The disordered stretch occupies residues 546–642 (GENPFTDNPE…EDDEEGGGGP (97 aa)). Positions 553–564 (NPEEEKEQDEVE) are enriched in acidic residues. A compositionally biased stretch (pro residues) spans 585–605 (AQPPVPLEPAPGTTTPPPPPP). Positions 631-642 (DMEDDEEGGGGP) are enriched in acidic residues.

The protein belongs to the AKAP95 family. Interacts (via N-terminus) with DHX9 (via RGG region). Interacts with TMPO isoform Beta, PRPF40A, RNF43, lamin-B. Interacts with HDAC3; increased during mitosis. Post-translationally, phosphorylated on serine or threonine residues possibly by PKA.

The protein localises to the nucleus. It localises to the nucleus matrix. Its subcellular location is the nucleus speckle. The protein resides in the PML body. It is found in the cytoplasm. Functionally, could play a role in constitutive transport element (CTE)-mediated gene expression by association with DHX9. Increases CTE-dependent nuclear unspliced mRNA export. Proposed to target PRKACA to the nucleus but does not seem to be implicated in the binding of regulatory subunit II of PKA. May be involved in nuclear envelope breakdown and chromatin condensation. May be involved in anchoring nuclear membranes to chromatin in interphase and in releasing membranes from chromating at mitosis. May regulate the initiation phase of DNA replication when associated with TMPO isoform Beta. Required for cell cycle G2/M transition and histone deacetylation during mitosis. In mitotic cells recruits HDAC3 to the vicinity of chromatin leading to deacetylation and subsequent phosphorylation at 'Ser-10' of histone H3; in this function seems to act redundantly with AKAP8. May be involved in regulation of pre-mRNA splicing. This is A-kinase anchor protein 8-like (Akap8l) from Mus musculus (Mouse).